The sequence spans 274 residues: Protein RecA (274 aa).

43–50 lines the ATP pocket; it reads GPESSGKT.

The protein belongs to the RecA family.

It is found in the cytoplasm. Can catalyze the hydrolysis of ATP in the presence of single-stranded DNA, the ATP-dependent uptake of single-stranded DNA by duplex DNA, and the ATP-dependent hybridization of homologous single-stranded DNAs. It interacts with LexA causing its activation and leading to its autocatalytic cleavage. This is Protein RecA from Neisseria flavescens.